The chain runs to 525 residues: Mitoguardin (525 aa).

Residues 26–45 traverse the membrane as a helical segment; that stretch reads VVLFSLTAGVALMSVLSRFL. Residues 47 to 67 show a composition bias toward basic residues; the sequence is RRKPPRPPRRARKYTGRRNRN. 2 disordered regions span residues 47–73 and 210–239; these read RRKPPRPPRRARKYTGRRNRNSMRSPN and DEAEEEAGEADDDRRSRKSGSVLSRAGSDP. Acidic residues predominate over residues 211-220; the sequence is EAEEEAGEAD.

It belongs to the mitoguardin family. Interacts with zuc.

It localises to the mitochondrion outer membrane. Functionally, regulator of mitochondrial fusion required to maintain neuronal homeostasis. The sequence is that of Mitoguardin from Drosophila melanogaster (Fruit fly).